The sequence spans 207 residues: Small ribosomal subunit protein uS4 (207 aa).

The interval 31-55 (KCKLDSKPGQHGRTSGARTSDYGTQ) is disordered. The segment covering 42-53 (GRTSGARTSDYG) has biased composition (polar residues). The S4 RNA-binding domain occupies 97–160 (SRLDNVVYRM…KKQARILEAL (64 aa)).

Belongs to the universal ribosomal protein uS4 family. In terms of assembly, part of the 30S ribosomal subunit. Contacts protein S5. The interaction surface between S4 and S5 is involved in control of translational fidelity.

Functionally, one of the primary rRNA binding proteins, it binds directly to 16S rRNA where it nucleates assembly of the body of the 30S subunit. Its function is as follows. With S5 and S12 plays an important role in translational accuracy. This is Small ribosomal subunit protein uS4 from Paraburkholderia phymatum (strain DSM 17167 / CIP 108236 / LMG 21445 / STM815) (Burkholderia phymatum).